The following is a 369-amino-acid chain: Chaperone protein DnaJ (369 aa).

The 66-residue stretch at 4–69 (SYYEILEVEK…KKRALYDRYG (66 aa)) folds into the J domain. The CR-type zinc finger occupies 130 to 207 (GCKKTIKAQY…CKGKTYILKD (78 aa)). Residues cysteine 143, cysteine 146, cysteine 159, cysteine 162, cysteine 181, cysteine 184, cysteine 195, and cysteine 198 each contribute to the Zn(2+) site. CXXCXGXG motif repeat units lie at residues 143–150 (CESCDGTG), 159–166 (CKQCNGQG), 181–188 (CGACQGKG), and 195–202 (CQACKGKT).

This sequence belongs to the DnaJ family. Homodimer. It depends on Zn(2+) as a cofactor.

The protein localises to the cytoplasm. In terms of biological role, participates actively in the response to hyperosmotic and heat shock by preventing the aggregation of stress-denatured proteins and by disaggregating proteins, also in an autonomous, DnaK-independent fashion. Unfolded proteins bind initially to DnaJ; upon interaction with the DnaJ-bound protein, DnaK hydrolyzes its bound ATP, resulting in the formation of a stable complex. GrpE releases ADP from DnaK; ATP binding to DnaK triggers the release of the substrate protein, thus completing the reaction cycle. Several rounds of ATP-dependent interactions between DnaJ, DnaK and GrpE are required for fully efficient folding. Also involved, together with DnaK and GrpE, in the DNA replication of plasmids through activation of initiation proteins. In Helicobacter pylori (strain J99 / ATCC 700824) (Campylobacter pylori J99), this protein is Chaperone protein DnaJ.